The chain runs to 401 residues: S-adenosylmethionine synthase (401 aa).

135-140 (GHGSGD) contributes to the ATP binding site.

It belongs to the AdoMet synthase 2 family. It depends on Mg(2+) as a cofactor.

It carries out the reaction L-methionine + ATP + H2O = S-adenosyl-L-methionine + phosphate + diphosphate. Its pathway is amino-acid biosynthesis; S-adenosyl-L-methionine biosynthesis; S-adenosyl-L-methionine from L-methionine: step 1/1. Its function is as follows. Catalyzes the formation of S-adenosylmethionine from methionine and ATP. The sequence is that of S-adenosylmethionine synthase (mat) from Methanothermobacter marburgensis (strain ATCC BAA-927 / DSM 2133 / JCM 14651 / NBRC 100331 / OCM 82 / Marburg) (Methanobacterium thermoautotrophicum).